A 548-amino-acid polypeptide reads, in one-letter code: Probable malate:quinone oxidoreductase (548 aa).

The disordered stretch occupies residues 521–548 (DKPQAADSTPKPQLKPQPVQKEVADIAL). Residues 530–541 (PKPQLKPQPVQK) are compositionally biased toward low complexity.

This sequence belongs to the MQO family. The cofactor is FAD.

It catalyses the reaction (S)-malate + a quinone = a quinol + oxaloacetate. It functions in the pathway carbohydrate metabolism; tricarboxylic acid cycle; oxaloacetate from (S)-malate (quinone route): step 1/1. The protein is Probable malate:quinone oxidoreductase of Escherichia coli (strain UTI89 / UPEC).